A 197-amino-acid chain; its full sequence is MKVGVLALQGGVVEHIYMIREAAKRLGKEVEVVEVRKPEHLNSLRAIVLPGGESTAMYKLGKRTGLDKRLKEALLEGLPALGTCAGAALLAREIEDKQSGKRYEPLLGVADFKVVRNFFGRQRESFEANLNIKGIGTFRGVFIRAPVMVPLSPAVEVLGEFKGNAVMVKQGNIIATSFHPELTSDTRIHEMLLSEAS.

52–54 serves as a coordination point for L-glutamine; that stretch reads GES. C84 acts as the Nucleophile in catalysis. L-glutamine is bound by residues R116 and 143–144; that span reads IR. Catalysis depends on charge relay system residues H179 and E181.

This sequence belongs to the glutaminase PdxT/SNO family. In the presence of PdxS, forms a dodecamer of heterodimers. Only shows activity in the heterodimer.

The catalysed reaction is aldehydo-D-ribose 5-phosphate + D-glyceraldehyde 3-phosphate + L-glutamine = pyridoxal 5'-phosphate + L-glutamate + phosphate + 3 H2O + H(+). It catalyses the reaction L-glutamine + H2O = L-glutamate + NH4(+). It participates in cofactor biosynthesis; pyridoxal 5'-phosphate biosynthesis. Its function is as follows. Catalyzes the hydrolysis of glutamine to glutamate and ammonia as part of the biosynthesis of pyridoxal 5'-phosphate. The resulting ammonia molecule is channeled to the active site of PdxS. The sequence is that of Pyridoxal 5'-phosphate synthase subunit PdxT from Ignicoccus hospitalis (strain KIN4/I / DSM 18386 / JCM 14125).